The sequence spans 450 residues: Putative mediator of RNA polymerase II transcription subunit 27 (450 aa).

Residues 15-118 (QQQQAQQHQQ…QKLKKSMDLV (104 aa)) adopt a coiled-coil conformation.

It belongs to the Mediator complex subunit 27 family. As to quaternary structure, component of the Mediator complex.

The protein resides in the nucleus. Its function is as follows. Component of the Mediator complex, a coactivator involved in the regulated transcription of nearly all RNA polymerase II-dependent genes. Mediator functions as a bridge to convey information from gene-specific regulatory proteins to the basal RNA polymerase II transcription machinery. Mediator is recruited to promoters by direct interactions with regulatory proteins and serves as a scaffold for the assembly of a functional preinitiation complex with RNA polymerase II and the general transcription factors. The protein is Putative mediator of RNA polymerase II transcription subunit 27 (med27) of Dictyostelium discoideum (Social amoeba).